The sequence spans 410 residues: F-box protein At5g36730 (410 aa).

Residues 1 to 46 (MAMSNLPRDLLEEVLSRVPVKSIAAVRSTCKNWNSLTYGQSFTKKL) enclose the F-box domain.

This chain is F-box protein At5g36730, found in Arabidopsis thaliana (Mouse-ear cress).